Here is a 165-residue protein sequence, read N- to C-terminus: Probable velvet family sexual development regulator CC1G_12219 (165 aa).

The 121-residue stretch at 1-121 (MSNTDAQTSF…SVWGAQVNVR (121 aa)) folds into the Velvet domain.

The protein belongs to the velvet family.

It localises to the nucleus. Functionally, velvet-domain-containing protein that probably acts as a positive regulator of sexual development. The sequence is that of Probable velvet family sexual development regulator CC1G_12219 from Coprinopsis cinerea (strain Okayama-7 / 130 / ATCC MYA-4618 / FGSC 9003) (Inky cap fungus).